Here is a 104-residue protein sequence, read N- to C-terminus: Large ribosomal subunit protein bL21 (104 aa).

Belongs to the bacterial ribosomal protein bL21 family. Part of the 50S ribosomal subunit. Contacts protein L20.

This protein binds to 23S rRNA in the presence of protein L20. The sequence is that of Large ribosomal subunit protein bL21 from Francisella tularensis subsp. tularensis (strain FSC 198).